Consider the following 281-residue polypeptide: uncharacterized protein (281 aa).

This is an uncharacterized protein from Mycoplasma pneumoniae (strain ATCC 29342 / M129 / Subtype 1) (Mycoplasmoides pneumoniae).